A 42-amino-acid polypeptide reads, in one-letter code: Lebocin-like anionic peptide 1 (42 aa).

In terms of tissue distribution, hemolymph.

It localises to the secreted. In terms of biological role, antimicrobial protein. Has antibacterial activity against the Gram-positive bacteria M.luteus (MIC=22.7 uM) and L.monocytogenes (MIC=90.9 uM). Lacks antibacterial activity against the Gram-positive bacteria B.circulans, S.aureus, and S.lutea, and the Gram-negative bacteria E.coli D31, E.coli ATCC 25922, and S.typhimurium. Has antifungal activity against A.niger (MIC=90.9 uM) and T.harzianum (MIC=90.9 uM), but lacks antifungal activity against S.cerevisiae, P.pastoris, Z.marxianus, C.albicans, C.fructus, and F.oxysporum. The chain is Lebocin-like anionic peptide 1 from Galleria mellonella (Greater wax moth).